The sequence spans 631 residues: Phosphomethylpyrimidine synthase (631 aa).

Substrate is bound by residues Asn-239, Met-268, Tyr-297, His-333, 353 to 355 (SRG), 394 to 397 (DGLR), and Glu-433. His-437 provides a ligand contact to Zn(2+). Substrate is bound at residue Tyr-460. His-501 contacts Zn(2+). Cys-581, Cys-584, and Cys-589 together coordinate [4Fe-4S] cluster.

This sequence belongs to the ThiC family. As to quaternary structure, homodimer. [4Fe-4S] cluster serves as cofactor.

The catalysed reaction is 5-amino-1-(5-phospho-beta-D-ribosyl)imidazole + S-adenosyl-L-methionine = 4-amino-2-methyl-5-(phosphooxymethyl)pyrimidine + CO + 5'-deoxyadenosine + formate + L-methionine + 3 H(+). It functions in the pathway cofactor biosynthesis; thiamine diphosphate biosynthesis. Functionally, catalyzes the synthesis of the hydroxymethylpyrimidine phosphate (HMP-P) moiety of thiamine from aminoimidazole ribotide (AIR) in a radical S-adenosyl-L-methionine (SAM)-dependent reaction. The chain is Phosphomethylpyrimidine synthase from Escherichia coli O127:H6 (strain E2348/69 / EPEC).